Reading from the N-terminus, the 476-residue chain is Proline dehydrogenase 2, mitochondrial (476 aa).

Residues Met1 to Glu29 constitute a mitochondrion transit peptide.

Belongs to the proline oxidase family. FAD is required as a cofactor. As to expression, expressed in the vascular tissue and in the abscission zone of petals, sepals, stamina, pistils and siliques. Not detected in petioles.

The protein localises to the mitochondrion. It carries out the reaction L-proline + a quinone = (S)-1-pyrroline-5-carboxylate + a quinol + H(+). The protein operates within amino-acid degradation; L-proline degradation into L-glutamate; L-glutamate from L-proline: step 1/2. In terms of biological role, converts proline to delta-1-pyrroline-5-carboxylate. In Arabidopsis thaliana (Mouse-ear cress), this protein is Proline dehydrogenase 2, mitochondrial (POX2).